Here is a 256-residue protein sequence, read N- to C-terminus: Hydroxypyruvate/pyruvate aldolase (256 aa).

His-48 serves as the catalytic Proton acceptor. Residues Glu-152 and Asp-178 each coordinate a divalent metal cation.

It belongs to the HpcH/HpaI aldolase family. The cofactor is a divalent metal cation.

The catalysed reaction is D-glyceraldehyde + pyruvate = 2-dehydro-3-deoxy-L-galactonate. Its function is as follows. Aldolase which can catalyze in vitro the aldolisation reaction between hydroxypyruvate (HPA) or pyruvate (PA) and D-glyceraldehyde (D-GA). The condensation of pyruvate and D-glyceraldehyde produces 2-dehydro-3-deoxy-L-galactonate as the major product. Has weak activity with hydroxypyruvate and D-glyceraldehyde. The protein is Hydroxypyruvate/pyruvate aldolase of Roseobacter denitrificans (strain ATCC 33942 / OCh 114) (Erythrobacter sp. (strain OCh 114)).